A 90-amino-acid chain; its full sequence is Lantipeptide prochlorosin 1.7 (90 aa).

Positions methionine 1 to glycine 68 are excised as a propeptide. 2,3-didehydrobutyrine occurs at positions 69 and 73. The lanthionine (Ser-Cys) cross-link spans serine 76–cysteine 79. 2 consecutive cross-links (beta-methyllanthionine (Thr-Cys)) follow at residues threonine 78–cysteine 82 and threonine 81–cysteine 90.

In terms of processing, cross-links are proved in vitro, when coepressed in E.coli with the ProcM lanthionine synthetase. The lanthionine residue has a DL configuration (with 2S,6R stereochemistry), whereas the beta-methyllanthionine residues have a DL configuration (with 2S,3S,6R stereochemistry). Post-translationally, maturation of prochlorosin involves the enzymatic conversion of Thr, and Ser into dehydrated AA and the formation of thioether bonds with cysteines. This is followed by membrane translocation and cleavage of the modified precursor.

It localises to the secreted. In terms of biological role, lanthionine-containing peptide (lantipeptide) with unknown function. Does not show antibiotic activity against Lactococcus lactis 117 and Bacillus subtilis 6633 bacteria. Organisms that produce this peptide live in oligotrophic environments at very dilute concentrations, suggesting this peptide is not secreted to influence other bacteria. The chain is Lantipeptide prochlorosin 1.7 from Prochlorococcus marinus (strain MIT 9313).